A 59-amino-acid polypeptide reads, in one-letter code: Large ribosomal subunit protein bL32c (59 aa).

Positions Ser37 to Lys59 are disordered.

The protein belongs to the bacterial ribosomal protein bL32 family.

Its subcellular location is the plastid. It localises to the chloroplast. The chain is Large ribosomal subunit protein bL32c from Hordeum vulgare (Barley).